Consider the following 238-residue polypeptide: Large ribosomal subunit protein uL1 (238 aa).

This sequence belongs to the universal ribosomal protein uL1 family. In terms of assembly, part of the 50S ribosomal subunit.

In terms of biological role, binds directly to 23S rRNA. The L1 stalk is quite mobile in the ribosome, and is involved in E site tRNA release. Functionally, protein L1 is also a translational repressor protein, it controls the translation of the L11 operon by binding to its mRNA. The polypeptide is Large ribosomal subunit protein uL1 (Saccharopolyspora erythraea (strain ATCC 11635 / DSM 40517 / JCM 4748 / NBRC 13426 / NCIMB 8594 / NRRL 2338)).